The following is a 139-amino-acid chain: Ribulose bisphosphate carboxylase small subunit (139 aa).

Belongs to the RuBisCO small chain family. In terms of assembly, heterohexadecamer of 8 large and 8 small subunits.

Its subcellular location is the plastid. The protein resides in the chloroplast. Its function is as follows. RuBisCO catalyzes two reactions: the carboxylation of D-ribulose 1,5-bisphosphate, the primary event in carbon dioxide fixation, as well as the oxidative fragmentation of the pentose substrate in the photorespiration process. Both reactions occur simultaneously and in competition at the same active site. Although the small subunit is not catalytic it is essential for maximal activity. The protein is Ribulose bisphosphate carboxylase small subunit of Olisthodiscus luteus (Marine phytoflagellate).